The following is a 493-amino-acid chain: Probable fatty acyl-CoA reductase 4 (493 aa).

It belongs to the fatty acyl-CoA reductase family. Expressed in the endodermal cell layer surrounding the central vasculature in roots. Expressed in the hilum region of seeds. Expressed in stamen filaments and receptacle of siliques.

It carries out the reaction a long-chain fatty acyl-CoA + 2 NADPH + 2 H(+) = a long-chain primary fatty alcohol + 2 NADP(+) + CoA. Its function is as follows. Catalyzes the reduction of fatty acyl-CoA to fatty alcohols. Catalyzes specifically the formation of C18:0 and C20:0 fatty alcohols. Provides the fatty alcohols required for synthesis of suberin in roots, seed coat and wound-induced leaf tissue. Provides the fatty alcohols required for synthesis of alkyl hydroxycinnamates in root waxes. The protein is Probable fatty acyl-CoA reductase 4 of Arabidopsis thaliana (Mouse-ear cress).